Consider the following 216-residue polypeptide: Vesicle-associated membrane protein 7A (216 aa).

At 1 to 189 (MSQTDILYAC…KRKLWWQNKK (189 aa)) the chain is on the cytoplasmic side. The Longin domain maps to 6 to 112 (ILYACVSYKG…ATYDPFIRVL (107 aa)). One can recognise a v-SNARE coiled-coil homology domain in the interval 126–186 (KMNLVMDQVS…VALKRKLWWQ (61 aa)). Residues 190–210 (LAIAIGLVVCILIAVITLALL) traverse the membrane as a helical; Anchor for type IV membrane protein segment. At 211 to 216 (KYFKVI) the chain is on the vesicular side.

This sequence belongs to the synaptobrevin family. In terms of assembly, component of the SNARE complex composed of syn7A, syn8A, vamp7A and vti1A.

It localises to the cytoplasmic vesicle. It is found in the secretory vesicle membrane. Its subcellular location is the golgi apparatus. The protein localises to the trans-Golgi network membrane. The protein resides in the late endosome membrane. It localises to the lysosome membrane. It is found in the endoplasmic reticulum membrane. Its subcellular location is the phagosome membrane. Functionally, involved in the targeting and/or fusion of transport vesicles to their target membrane during transport of proteins from the early endosome to the lysosome. Required for heterotypic fusion of late endosomes with lysosomes and homotypic lysosomal fusion. Required for calcium regulated lysosomal exocytosis. This chain is Vesicle-associated membrane protein 7A, found in Dictyostelium discoideum (Social amoeba).